Here is a 232-residue protein sequence, read N- to C-terminus: 5'-methylthioadenosine/S-adenosylhomocysteine nucleosidase (232 aa).

Glu-12 acts as the Proton acceptor in catalysis. Residues Gly-78, Ile-152, and Met-173–Glu-174 each bind substrate. Residue Asp-197 is the Proton donor of the active site.

Belongs to the PNP/UDP phosphorylase family. MtnN subfamily. As to quaternary structure, homodimer.

The catalysed reaction is S-adenosyl-L-homocysteine + H2O = S-(5-deoxy-D-ribos-5-yl)-L-homocysteine + adenine. It catalyses the reaction S-methyl-5'-thioadenosine + H2O = 5-(methylsulfanyl)-D-ribose + adenine. It carries out the reaction 5'-deoxyadenosine + H2O = 5-deoxy-D-ribose + adenine. It functions in the pathway amino-acid biosynthesis; L-methionine biosynthesis via salvage pathway; S-methyl-5-thio-alpha-D-ribose 1-phosphate from S-methyl-5'-thioadenosine (hydrolase route): step 1/2. Functionally, catalyzes the irreversible cleavage of the glycosidic bond in both 5'-methylthioadenosine (MTA) and S-adenosylhomocysteine (SAH/AdoHcy) to adenine and the corresponding thioribose, 5'-methylthioribose and S-ribosylhomocysteine, respectively. Also cleaves 5'-deoxyadenosine, a toxic by-product of radical S-adenosylmethionine (SAM) enzymes, into 5-deoxyribose and adenine. Thus, is required for in vivo function of the radical SAM enzymes biotin synthase and lipoic acid synthase, that are inhibited by 5'-deoxyadenosine accumulation. This is 5'-methylthioadenosine/S-adenosylhomocysteine nucleosidase from Escherichia fergusonii (strain ATCC 35469 / DSM 13698 / CCUG 18766 / IAM 14443 / JCM 21226 / LMG 7866 / NBRC 102419 / NCTC 12128 / CDC 0568-73).